Reading from the N-terminus, the 290-residue chain is MSLVSYPRSESESDIEEETPLASKSFDPTLFQHARRKLSVDSTKKSPKRLKRQVDLQKSSFNDKTFNESDVISNERFKSNDLLELLPAPKNQAELAPKSSKRSDLDLNENYLLPNNSVSDLTSTGSSETVKKSTYSEKSGNVSLFNIVGSESKQASLVDSDQKPYQPILIKPKARANPPKLRNQPENDFISIANHSVHSNAEDINIINEDYIEIGRHRKEKGRIIDVDINKLPKPTQEALPSAPTIKSVAPGRHQLSSLVEMAISQKDNFEAYFEQQRSNKKASSQKYGF.

Disordered regions lie at residues 1 to 61 (MSLV…KSSF) and 114 to 134 (PNNSVSDLTSTGSSETVKKST). Polar residues predominate over residues 114-128 (PNNSVSDLTSTGSSE).

Belongs to the 40S cdc5-associated complex (or cwf complex), a spliceosome sub-complex reminiscent of a late-stage spliceosome composed of the U2, U5 and U6 snRNAs and at least brr2, cdc5, cwf2/prp3, cwf3/syf1, cwf4/syf3, cwf5/ecm2, spp42/cwf6, cwf7/spf27, cwf8, cwf9, cwf10, cwf11, cwf12, prp45/cwf13, cwf14, cwf15, cwf16, cwf17, cwf18, cwf19, cwf20, cwf21, cwf22, cwf23, cwf24, cwf25, cwf26, cyp7/cwf27, cwf28, cwf29/ist3, lea1, msl1, prp5/cwf1, prp10, prp12/sap130, prp17, prp22, sap61, sap62, sap114, sap145, slu7, smb1, smd1, smd3, smf1, smg1 and syf2.

It localises to the nucleus. In terms of biological role, involved in mRNA splicing where it associates with cdc5 and the other cwf proteins as part of the spliceosome. This is Pre-mRNA-splicing factor cwf20 (cwf20) from Schizosaccharomyces pombe (strain 972 / ATCC 24843) (Fission yeast).